A 422-amino-acid polypeptide reads, in one-letter code: Beta-1,3-galactosyltransferase 2 (422 aa).

At 1–24 (MLQWRRRHCCFAKMTWNAKRSLFR) the chain is on the cytoplasmic side. A helical; Signal-anchor for type II membrane protein transmembrane segment spans residues 25–45 (THLIGVLSLVFLFAMFLFFNH). The Lumenal portion of the chain corresponds to 46–422 (HDWLPGRAGF…AGRYRHRKLH (377 aa)). N75, N100, N119, N176, and N226 each carry an N-linked (GlcNAc...) asparagine glycan. A disordered region spans residues 90 to 110 (TLRPQTATNSNNTDLSPQGVT).

It belongs to the glycosyltransferase 31 family. It depends on Mn(2+) as a cofactor. As to expression, detected in heart and brain.

Its subcellular location is the golgi apparatus membrane. It carries out the reaction an N-acetyl-beta-D-glucosaminyl derivative + UDP-alpha-D-galactose = a beta-D-galactosyl-(1-&gt;3)-N-acetyl-beta-D-glucosaminyl derivative + UDP + H(+). The catalysed reaction is a beta-D-GlcNAc-(1-&gt;3)-beta-D-Gal-(1-&gt;4)-beta-D-Glc-(1&lt;-&gt;1)-Cer(d18:1(4E)) + UDP-alpha-D-galactose = a beta-D-Gal-(1-&gt;3)-beta-D-GlcNAc-(1-&gt;3)-beta-D-Gal-(1-&gt;4)-beta-D-Glc-(1&lt;-&gt;1')-Cer(d18:1(4E)) + UDP + H(+). It catalyses the reaction a neolactoside IV(3)-beta-GlcNAc-nLc4Cer(d18:1(4E)) + UDP-alpha-D-galactose = a neolactoside IV(3)-beta-[Gal-beta-(1-&gt;3)-GlcNAc]-nLc4Cer(d18:1(4E)) + UDP + H(+). It functions in the pathway protein modification; protein glycosylation. In terms of biological role, beta-1,3-galactosyltransferase that transfers galactose from UDP-galactose to substrates with a terminal beta-N-acetylglucosamine (beta-GlcNAc) residue. Can also utilize substrates with a terminal galactose residue, albeit with lower efficiency. Involved in the biosynthesis of the carbohydrate moieties of glycolipids and glycoproteins. Inactive towards substrates with terminal alpha-N-acetylglucosamine (alpha-GlcNAc) or alpha-N-acetylgalactosamine (alpha-GalNAc) residues. The chain is Beta-1,3-galactosyltransferase 2 from Homo sapiens (Human).